The following is a 153-amino-acid chain: Small ribosomal subunit protein bS16 (153 aa).

The segment covering 121–131 has biased composition (basic and acidic residues); the sequence is AEAAAKAKAEA. Positions 121–153 are disordered; that stretch reads AEAAAKAKAEAEAAAAAEEAPAEEAAEEAPAED. Over residues 140 to 153 the composition is skewed to acidic residues; it reads APAEEAAEEAPAED.

It belongs to the bacterial ribosomal protein bS16 family.

The sequence is that of Small ribosomal subunit protein bS16 from Bifidobacterium longum (strain DJO10A).